Reading from the N-terminus, the 249-residue chain is Phosphatidylserine decarboxylase proenzyme (249 aa).

Catalysis depends on S208, which acts as the Schiff-base intermediate with substrate; via pyruvic acid. S208 is subject to Pyruvic acid (Ser); by autocatalysis.

This sequence belongs to the phosphatidylserine decarboxylase family. PSD-A subfamily. In terms of assembly, heterodimer of a large membrane-associated beta subunit and a small pyruvoyl-containing alpha subunit. Pyruvate is required as a cofactor. In terms of processing, is synthesized initially as an inactive proenzyme. Formation of the active enzyme involves a self-maturation process in which the active site pyruvoyl group is generated from an internal serine residue via an autocatalytic post-translational modification. Two non-identical subunits are generated from the proenzyme in this reaction, and the pyruvate is formed at the N-terminus of the alpha chain, which is derived from the carboxyl end of the proenzyme. The post-translation cleavage follows an unusual pathway, termed non-hydrolytic serinolysis, in which the side chain hydroxyl group of the serine supplies its oxygen atom to form the C-terminus of the beta chain, while the remainder of the serine residue undergoes an oxidative deamination to produce ammonia and the pyruvoyl prosthetic group on the alpha chain.

It is found in the cell membrane. The enzyme catalyses a 1,2-diacyl-sn-glycero-3-phospho-L-serine + H(+) = a 1,2-diacyl-sn-glycero-3-phosphoethanolamine + CO2. The protein operates within phospholipid metabolism; phosphatidylethanolamine biosynthesis; phosphatidylethanolamine from CDP-diacylglycerol: step 2/2. In terms of biological role, catalyzes the formation of phosphatidylethanolamine (PtdEtn) from phosphatidylserine (PtdSer). The sequence is that of Phosphatidylserine decarboxylase proenzyme from Erythrobacter litoralis (strain HTCC2594).